A 1514-amino-acid polypeptide reads, in one-letter code: ABC transporter C family member 5 (1514 aa).

A run of 10 helical transmembrane segments spans residues 16–36, 76–96, 111–131, 142–162, 177–197, 312–332, 334–354, 421–441, 446–466, and 533–553; these read LLEL…LFAV, FGFN…VLVL, FVLC…FLVL, PFLV…TMYV, SHVV…FLAW, VFAG…SYFV, YLGG…IFFT, WYLH…AILY, IAAV…IPLA, and FIFW…SIFL. In terms of domain architecture, ABC transmembrane type-1 1 spans 307 to 588; the sequence is AACNAVFAGL…FPDLVSMMAQ (282 aa). The ABC transporter 1 domain occupies 622–845; that stretch reads IEIKDGVFCW…GTDFKALVSA (224 aa). 657 to 664 provides a ligand contact to ATP; it reads GTVGSGKS. Residues 899-927 adopt a coiled-coil conformation; it reads ASDLKAIKEKKKKAKRSRKKQLVQEEERV. 6 helical membrane passes run 946–966, 986–1006, 1078–1098, 1117–1137, 1155–1175, and 1180–1200; these read GALI…QIAS, PTLL…FIFV, IVAV…PVAV, IVSI…AGAA, LLDC…WLCL, and LSTL…HGTI. Residues 949 to 1231 enclose the ABC transmembrane type-1 2 domain; sequence IPLIILAQAA…WILSFCKLEN (283 aa). The ABC transporter 2 domain occupies 1268-1502; it reads IELVDVKVRY…KSSMFLKLVT (235 aa). Residue 1302–1309 participates in ATP binding; that stretch reads GRTGSGKS.

This sequence belongs to the ABC transporter superfamily. ABCC family. Conjugate transporter (TC 3.A.1.208) subfamily. As to expression, ubiquitous, mostly in vascular tissues and epidermis, including guard cells.

Its subcellular location is the membrane. The catalysed reaction is ATP + H2O + xenobioticSide 1 = ADP + phosphate + xenobioticSide 2.. Its activity is regulated as follows. (E(2)17G) transport activity in negatively regulated by organic anions such as oestradiol-3-sulfate, luteolin-7-O-diglucuronide-4'-O-glucuronide, glycocholate, vanadate and the sulfonylurea glibenclamide, and, to a lower extent, by bafilomycin A1, NH(4)Cl, GSH, GSSG and DNB-GS. Its function is as follows. Pump for glutathione S-conjugates. Involved in regulation of K(+) and Na(+) cell content. Mediates resistance to NaCl and Li(+), confers sensitivity to sulfonylurea drugs such as glibenclamide (inducer of stomatal opening), and required for stomatal opening regulation by auxin, abscisic acid (ABA) and external Ca(2+). Transports oestradiol-17-(beta-D-glucuronide) (E(2)17G). Involved in the root auxin content regulation that controls the transition from primary root elongation to lateral root formation. Plays a role in ABA-mediated germination inhibition. High-affinity inositol hexakisphosphate transporter that plays a role in guard cell signaling and phytic acid storage. Required for phytic acid accumulation in developing seeds. Phytic acid is the primary storage form of phosphorus in cereal grains and other plant seeds. The protein is ABC transporter C family member 5 (ABCC5) of Arabidopsis thaliana (Mouse-ear cress).